A 220-amino-acid chain; its full sequence is Ribonuclease P protein component 3 (220 aa).

It belongs to the eukaryotic/archaeal RNase P protein component 3 family. As to quaternary structure, consists of a catalytic RNA component and at least 4-5 protein subunits.

It localises to the cytoplasm. It carries out the reaction Endonucleolytic cleavage of RNA, removing 5'-extranucleotides from tRNA precursor.. In terms of biological role, part of ribonuclease P, a protein complex that generates mature tRNA molecules by cleaving their 5'-ends. In Thermococcus kodakarensis (strain ATCC BAA-918 / JCM 12380 / KOD1) (Pyrococcus kodakaraensis (strain KOD1)), this protein is Ribonuclease P protein component 3.